We begin with the raw amino-acid sequence, 133 residues long: Small ribosomal subunit protein bS6 (133 aa).

Belongs to the bacterial ribosomal protein bS6 family.

Functionally, binds together with bS18 to 16S ribosomal RNA. In Chlorobium limicola (strain DSM 245 / NBRC 103803 / 6330), this protein is Small ribosomal subunit protein bS6.